A 378-amino-acid polypeptide reads, in one-letter code: UDP-N-acetylglucosamine--N-acetylmuramyl-(pentapeptide) pyrophosphoryl-undecaprenol N-acetylglucosamine transferase (378 aa).

Residues 24–26 (TAG), N144, R181, S215, and Q310 contribute to the UDP-N-acetyl-alpha-D-glucosamine site.

This sequence belongs to the glycosyltransferase 28 family. MurG subfamily.

The protein localises to the cell membrane. The enzyme catalyses di-trans,octa-cis-undecaprenyl diphospho-N-acetyl-alpha-D-muramoyl-L-alanyl-D-glutamyl-meso-2,6-diaminopimeloyl-D-alanyl-D-alanine + UDP-N-acetyl-alpha-D-glucosamine = di-trans,octa-cis-undecaprenyl diphospho-[N-acetyl-alpha-D-glucosaminyl-(1-&gt;4)]-N-acetyl-alpha-D-muramoyl-L-alanyl-D-glutamyl-meso-2,6-diaminopimeloyl-D-alanyl-D-alanine + UDP + H(+). The protein operates within cell wall biogenesis; peptidoglycan biosynthesis. Cell wall formation. Catalyzes the transfer of a GlcNAc subunit on undecaprenyl-pyrophosphoryl-MurNAc-pentapeptide (lipid intermediate I) to form undecaprenyl-pyrophosphoryl-MurNAc-(pentapeptide)GlcNAc (lipid intermediate II). This chain is UDP-N-acetylglucosamine--N-acetylmuramyl-(pentapeptide) pyrophosphoryl-undecaprenol N-acetylglucosamine transferase, found in Nocardia farcinica (strain IFM 10152).